The chain runs to 804 residues: Cas scaffolding protein family member 4 (804 aa).

Residues 11-73 (PKTLLARALY…PANRLQVLRE (63 aa)) form the SH3 domain. Phosphoserine occurs at positions 200 and 297. 3 disordered regions span residues 369–395 (LERGREAPENSPWISGQTSFLSPDSDR), 607–628 (QRETESYQESSPFDRQPTTEHS), and 642–686 (QQSP…TERK). The span at 380–390 (PWISGQTSFLS) shows a compositional bias: polar residues. Basic and acidic residues predominate over residues 649–664 (EKGKPTMEGKSNRNPD).

The protein belongs to the CAS family. Interacts (via SH3 domain) with PTK2/FAK1 (via C-terminus). Post-translationally, phosphorylated on tyrosines by SRC.

It localises to the cytoplasm. It is found in the cytoskeleton. The protein resides in the cell junction. The protein localises to the focal adhesion. In terms of biological role, docking protein that plays a role in tyrosine kinase-based signaling related to cell adhesion and cell spreading. Regulates PTK2/FAK1 activity, focal adhesion integrity, and cell spreading. This Mus musculus (Mouse) protein is Cas scaffolding protein family member 4.